The sequence spans 310 residues: Tyrosine recombinase XerC (310 aa).

A Core-binding (CB) domain is found at 11 to 97 (NSLQKPLERF…SLRSFFDFLI (87 aa)). Residues 118–298 (PLPKNLDVDE…DFQHLAQAYD (181 aa)) enclose the Tyr recombinase domain. Catalysis depends on residues arginine 157, lysine 181, histidine 250, arginine 253, and histidine 276. Tyrosine 285 acts as the O-(3'-phospho-DNA)-tyrosine intermediate in catalysis.

Belongs to the 'phage' integrase family. XerC subfamily. Forms a cyclic heterotetrameric complex composed of two molecules of XerC and two molecules of XerD.

It is found in the cytoplasm. Functionally, site-specific tyrosine recombinase, which acts by catalyzing the cutting and rejoining of the recombining DNA molecules. The XerC-XerD complex is essential to convert dimers of the bacterial chromosome into monomers to permit their segregation at cell division. It also contributes to the segregational stability of plasmids. The protein is Tyrosine recombinase XerC of Vibrio parahaemolyticus serotype O3:K6 (strain RIMD 2210633).